A 172-amino-acid polypeptide reads, in one-letter code: 3-hydroxydecanoyl-[acyl-carrier-protein] dehydratase (172 aa).

H70 is an active-site residue.

It belongs to the thioester dehydratase family. FabA subfamily. In terms of assembly, homodimer.

The protein resides in the cytoplasm. The enzyme catalyses a (3R)-hydroxyacyl-[ACP] = a (2E)-enoyl-[ACP] + H2O. It catalyses the reaction (3R)-hydroxydecanoyl-[ACP] = (2E)-decenoyl-[ACP] + H2O. The catalysed reaction is (2E)-decenoyl-[ACP] = (3Z)-decenoyl-[ACP]. The protein operates within lipid metabolism; fatty acid biosynthesis. Necessary for the introduction of cis unsaturation into fatty acids. Catalyzes the dehydration of (3R)-3-hydroxydecanoyl-ACP to E-(2)-decenoyl-ACP and then its isomerization to Z-(3)-decenoyl-ACP. Can catalyze the dehydratase reaction for beta-hydroxyacyl-ACPs with saturated chain lengths up to 16:0, being most active on intermediate chain length. The chain is 3-hydroxydecanoyl-[acyl-carrier-protein] dehydratase from Xylella fastidiosa (strain M23).